The primary structure comprises 532 residues: Di/tripeptide-binding protein 2 (532 aa).

Residues 1 to 24 form the signal peptide; the sequence is MRPRSALRYSLLLLAFAASAAIQA.

This sequence belongs to the bacterial solute-binding protein 5 family. In terms of assembly, the complex is composed of two ATP-binding proteins (DppD and DppF), two transmembrane proteins (DppB and DppC) and a solute-binding protein (DppA2). Five orthologous SBPs (DppA1-A5) are present in P.aeruginosa, which increases the substrate specificity of the DppBCDF transporter.

Its function is as follows. Part of the ABC transporter DppABCDF involved in the uptake of various di/tripeptides. Shows high flexibility on substrate recognition. Efficiently uses tripeptides. This Pseudomonas aeruginosa (strain UCBPP-PA14) protein is Di/tripeptide-binding protein 2.